Reading from the N-terminus, the 340-residue chain is Phosphoribosylformylglycinamidine cyclo-ligase (340 aa).

Belongs to the AIR synthase family.

It localises to the cytoplasm. It catalyses the reaction 2-formamido-N(1)-(5-O-phospho-beta-D-ribosyl)acetamidine + ATP = 5-amino-1-(5-phospho-beta-D-ribosyl)imidazole + ADP + phosphate + H(+). It participates in purine metabolism; IMP biosynthesis via de novo pathway; 5-amino-1-(5-phospho-D-ribosyl)imidazole from N(2)-formyl-N(1)-(5-phospho-D-ribosyl)glycinamide: step 2/2. In Acetivibrio thermocellus (strain ATCC 27405 / DSM 1237 / JCM 9322 / NBRC 103400 / NCIMB 10682 / NRRL B-4536 / VPI 7372) (Clostridium thermocellum), this protein is Phosphoribosylformylglycinamidine cyclo-ligase.